A 232-amino-acid chain; its full sequence is Glycerol-3-phosphate acyltransferase (232 aa).

6 helical membrane-spanning segments follow: residues phenylalanine 4–glycine 24, valine 56–phenylalanine 76, isoleucine 90–alanine 110, methionine 124–valine 144, valine 152–phenylalanine 172, and serine 191–histidine 211.

Belongs to the PlsY family. In terms of assembly, probably interacts with PlsX.

The protein localises to the cell inner membrane. It catalyses the reaction an acyl phosphate + sn-glycerol 3-phosphate = a 1-acyl-sn-glycero-3-phosphate + phosphate. It participates in lipid metabolism; phospholipid metabolism. Catalyzes the transfer of an acyl group from acyl-phosphate (acyl-PO(4)) to glycerol-3-phosphate (G3P) to form lysophosphatidic acid (LPA). This enzyme utilizes acyl-phosphate as fatty acyl donor, but not acyl-CoA or acyl-ACP. The protein is Glycerol-3-phosphate acyltransferase of Chlorobaculum tepidum (strain ATCC 49652 / DSM 12025 / NBRC 103806 / TLS) (Chlorobium tepidum).